Consider the following 71-residue polypeptide: uncharacterized protein (71 aa).

Its subcellular location is the mitochondrion matrix. The protein resides in the kinetoplast. This is an uncharacterized protein from Trypanosoma brucei brucei.